A 157-amino-acid chain; its full sequence is Phosphopantetheine adenylyltransferase (157 aa).

Ser8 contributes to the substrate binding site. ATP-binding positions include 8–9 and His16; that span reads SF. Substrate contacts are provided by Lys40, Thr72, and Arg86. ATP contacts are provided by residues 87–89, Glu97, and 122–128; these read GLR and YSFLSSS.

This sequence belongs to the bacterial CoaD family. As to quaternary structure, homohexamer. Mg(2+) serves as cofactor.

Its subcellular location is the cytoplasm. The catalysed reaction is (R)-4'-phosphopantetheine + ATP + H(+) = 3'-dephospho-CoA + diphosphate. It functions in the pathway cofactor biosynthesis; coenzyme A biosynthesis; CoA from (R)-pantothenate: step 4/5. Reversibly transfers an adenylyl group from ATP to 4'-phosphopantetheine, yielding dephospho-CoA (dPCoA) and pyrophosphate. This chain is Phosphopantetheine adenylyltransferase, found in Gloeothece citriformis (strain PCC 7424) (Cyanothece sp. (strain PCC 7424)).